Here is a 1245-residue protein sequence, read N- to C-terminus: Nidogen-1 (1245 aa).

The N-terminal stretch at M1–C28 is a signal peptide. The NIDO domain maps to P106 to P268. N187 is a glycosylation site (N-linked (GlcNAc...) asparagine). Sulfotyrosine is present on residues Y290 and Y295. An O-linked (GalNAc...) threonine glycan is attached at T299. The tract at residues V307–P344 is disordered. O-linked (GalNAc...) serine glycosylation is present at S331. Residues T337 and T345 are each glycosylated (O-linked (GalNAc...) threonine). Residue T348 is glycosylated (O-linked (GalNAc...) threonine; partial). The EGF-like 1 domain maps to S384–V424. 19 disulfide bridges follow: C388-C401, C395-C410, C409-C616, C412-C423, C670-C683, C677-C693, C695-C706, C712-C725, C719-C734, C736-C748, C760-C775, C767-C785, C787-C798, C804-C815, C809-C824, C826-C837, C847-C876, C887-C894, and C896-C917. The N-linked (GlcNAc...) asparagine glycan is linked to N415. Residues S428–A665 form the Nidogen G2 beta-barrel domain. The EGF-like 2 domain maps to L666–Y707. The short motif at R700–D702 is the Cell attachment site element. The EGF-like 3; calcium-binding domain maps to D708–V749. An EGF-like 4 domain is found at P756–R799. Positions D800 to M838 constitute an EGF-like 5; calcium-binding domain. The 74-residue stretch at K844–C917 folds into the Thyroglobulin type-1 domain. T920 and T933 each carry an O-linked (GalNAc...) threonine glycan. LDL-receptor class B repeat units lie at residues K988 to G1030, R1031 to R1073, G1074 to S1118, and S1119 to N1160. Positions G1206–I1242 constitute an EGF-like 6 domain. Disulfide bonds link C1210–C1221, C1217–C1230, and C1232–C1241.

Interacts with FBLN1. Interacts with LGALS3BP. Interacts with PLXDC1. Interacts with SVEP1. N- and O-glycosylated.

The protein localises to the secreted. It localises to the extracellular space. Its subcellular location is the extracellular matrix. It is found in the basement membrane. Functionally, sulfated glycoprotein widely distributed in basement membranes and tightly associated with laminin. Also binds to collagen IV and perlecan. It probably has a role in cell-extracellular matrix interactions. This Mus musculus (Mouse) protein is Nidogen-1 (Nid1).